The sequence spans 261 residues: Proteasome subunit alpha type-4 (261 aa).

A phosphoserine mark is found at Ser13 and Ser75. At Lys127 the chain carries N6-acetyllysine. Residue Ser173 is modified to Phosphoserine. An N6-acetyllysine modification is found at Lys176. Positions 240–261 (HEEEEAKAEREKKEKEQKEKDK) are disordered.

It belongs to the peptidase T1A family. In terms of assembly, the 26S proteasome consists of a 20S proteasome core and two 19S regulatory subunits. The 20S proteasome core is a barrel-shaped complex made of 28 subunits that are arranged in four stacked rings. The two outer rings are each formed by seven alpha subunits, and the two inner rings are formed by seven beta subunits. The proteolytic activity is exerted by three beta-subunits PSMB5, PSMB6 and PSMB7.

It is found in the cytoplasm. Its subcellular location is the nucleus. In terms of biological role, component of the 20S core proteasome complex involved in the proteolytic degradation of most intracellular proteins. This complex plays numerous essential roles within the cell by associating with different regulatory particles. Associated with two 19S regulatory particles, forms the 26S proteasome and thus participates in the ATP-dependent degradation of ubiquitinated proteins. The 26S proteasome plays a key role in the maintenance of protein homeostasis by removing misfolded or damaged proteins that could impair cellular functions, and by removing proteins whose functions are no longer required. Associated with the PA200 or PA28, the 20S proteasome mediates ubiquitin-independent protein degradation. This type of proteolysis is required in several pathways including spermatogenesis (20S-PA200 complex) or generation of a subset of MHC class I-presented antigenic peptides (20S-PA28 complex). This chain is Proteasome subunit alpha type-4 (PSMA4), found in Bos taurus (Bovine).